We begin with the raw amino-acid sequence, 289 residues long: BTB/POZ domain-containing protein KCTD7 (289 aa).

The disordered stretch occupies residues 1–35 (MVVVTGREPDSRRQDGAMSSSDAEDDFLEPATPTA). One can recognise a BTB domain in the interval 51-149 (EVVPLNIGGA…QLENMQPLKG (99 aa)).

As to quaternary structure, interacts with CUL3.

It localises to the cell membrane. Its subcellular location is the cytoplasm. The protein localises to the cytosol. Its function is as follows. May be involved in the control of excitability of cortical neurons. The chain is BTB/POZ domain-containing protein KCTD7 (KCTD7) from Homo sapiens (Human).